The primary structure comprises 356 residues: GTPase Obg (356 aa).

In terms of domain architecture, Obg spans E2–L160. The OBG-type G domain maps to A161 to F329. GTP contacts are provided by residues G167–S174, F192–S196, D215–G218, N282–D285, and S310–D312. S174 and T194 together coordinate Mg(2+).

Belongs to the TRAFAC class OBG-HflX-like GTPase superfamily. OBG GTPase family. As to quaternary structure, monomer. The cofactor is Mg(2+).

Its subcellular location is the cytoplasm. Its function is as follows. An essential GTPase which binds GTP, GDP and possibly (p)ppGpp with moderate affinity, with high nucleotide exchange rates and a fairly low GTP hydrolysis rate. Plays a role in control of the cell cycle, stress response, ribosome biogenesis and in those bacteria that undergo differentiation, in morphogenesis control. This chain is GTPase Obg, found in Leptospira interrogans serogroup Icterohaemorrhagiae serovar copenhageni (strain Fiocruz L1-130).